Reading from the N-terminus, the 312-residue chain is Porphobilinogen deaminase (312 aa).

The residue at position 243 (Cys243) is an S-(dipyrrolylmethanemethyl)cysteine.

The protein belongs to the HMBS family. As to quaternary structure, monomer. It depends on dipyrromethane as a cofactor.

It carries out the reaction 4 porphobilinogen + H2O = hydroxymethylbilane + 4 NH4(+). Its pathway is porphyrin-containing compound metabolism; protoporphyrin-IX biosynthesis; coproporphyrinogen-III from 5-aminolevulinate: step 2/4. Tetrapolymerization of the monopyrrole PBG into the hydroxymethylbilane pre-uroporphyrinogen in several discrete steps. This is Porphobilinogen deaminase from Vibrio campbellii (strain ATCC BAA-1116).